A 240-amino-acid chain; its full sequence is Ubiquinone biosynthesis O-methyltransferase (240 aa).

R44, G64, D85, and M129 together coordinate S-adenosyl-L-methionine.

It belongs to the methyltransferase superfamily. UbiG/COQ3 family.

The catalysed reaction is a 3-demethylubiquinol + S-adenosyl-L-methionine = a ubiquinol + S-adenosyl-L-homocysteine + H(+). The enzyme catalyses a 3-(all-trans-polyprenyl)benzene-1,2-diol + S-adenosyl-L-methionine = a 2-methoxy-6-(all-trans-polyprenyl)phenol + S-adenosyl-L-homocysteine + H(+). It participates in cofactor biosynthesis; ubiquinone biosynthesis. In terms of biological role, O-methyltransferase that catalyzes the 2 O-methylation steps in the ubiquinone biosynthetic pathway. In Escherichia coli O9:H4 (strain HS), this protein is Ubiquinone biosynthesis O-methyltransferase.